The following is a 425-amino-acid chain: Divalent metal cation transporter MntH (425 aa).

11 helical membrane-spanning segments follow: residues 30-50 (LLPF…PGNF), 61-81 (GYML…IQSL), 107-127 (IGLW…EFIG), 134-154 (LLFG…SFAI), 167-187 (AGIA…TFFA), 209-231 (VLLA…HSAL), 255-275 (ILIA…VAAA), 294-314 (FGHL…LVAG), 344-364 (FITI…TTAL), 365-385 (VLSQ…LIMF), and 401-421 (ITVV…FLIV).

This sequence belongs to the NRAMP family.

Its subcellular location is the cell membrane. Functionally, h(+)-stimulated, divalent metal cation uptake system. Involved in manganese uptake. Can probably also transport cadmium, cobalt, copper and zinc, but not iron. May be the predominant transporter of manganese during logarithmic phase growth. This is Divalent metal cation transporter MntH from Bacillus subtilis (strain 168).